Consider the following 275-residue polypeptide: MASFRLALIQLQISSINSDNVTRACSFIREAATQGAKIVSLPECFNSPYGTKYFPEYAEKIPGESTQKLSEVAKECSIYLIGGSIPEEDAGKLYNTCAVFGPDGTLLAKYRKIHLFDIDVPGKITFQESKTLSPGDSFCTFDTYCRVGLGICYDMRFAELAQIYAQRGCQLLVYPGAFNLTTGPAHWELLQRGRAVDNQVYVATASPARDDKASYVAWGHSTVVNPWGEVLAKAGTEEAIVYSDIDLKKLAEIRQQIPVFRQKRSDLYAVEMKKP.

The CN hydrolase domain occupies 4 to 247 (FRLALIQLQI…EAIVYSDIDL (244 aa)). Position 26 is a phosphoserine (S26). E43 serves as the catalytic Proton acceptor. The residue at position 68 (K68) is an N6-acetyllysine; alternate. An N6-succinyllysine; alternate modification is found at K68. The active-site Proton donor is K112. N6-succinyllysine is present on residues K123 and K130. Catalysis depends on C152, which acts as the Nucleophile.

Belongs to the carbon-nitrogen hydrolase superfamily. NIT1/NIT2 family. As to quaternary structure, homodimer.

It is found in the cytoplasm. The catalysed reaction is 2-oxoglutaramate + H2O = 2-oxoglutarate + NH4(+). It catalyses the reaction 2-oxosuccinamate + H2O = oxaloacetate + NH4(+). Functionally, has omega-amidase activity. The role of omega-amidase is to remove potentially toxic intermediates by converting 2-oxoglutaramate and 2-oxosuccinamate to biologically useful 2-oxoglutarate and oxaloacetate, respectively. The chain is Omega-amidase NIT2 (NIT2) from Pongo abelii (Sumatran orangutan).